The sequence spans 828 residues: Periplasmic nitrate reductase (828 aa).

Positions 1-31 (MKLSRRSFMKANAVAAAAAAAGLSVPGVARA) form a signal peptide, tat-type signal. A 4Fe-4S Mo/W bis-MGD-type domain is found at 39–95 (IKWDKAPCRFCGTGCGVLVGTQQGRVVACQGDPDAPVNRGLNCIKGYFLPKIMYGKD). Cys-46, Cys-49, Cys-53, and Cys-81 together coordinate [4Fe-4S] cluster. Mo-bis(molybdopterin guanine dinucleotide) contacts are provided by residues Lys-83, Gln-150, Asn-175, Cys-179, 212–219 (WGSNMAEM), 243–247 (STFQH), 262–264 (QSD), Met-372, Gln-376, Asn-482, 508–509 (SD), Lys-531, Asp-558, and 718–727 (TGRVLEHWHT). Phe-794 serves as a coordination point for substrate. Asn-802 and Lys-819 together coordinate Mo-bis(molybdopterin guanine dinucleotide).

Belongs to the prokaryotic molybdopterin-containing oxidoreductase family. NasA/NapA/NarB subfamily. Component of the periplasmic nitrate reductase NapAB complex composed of NapA and NapB. The cofactor is [4Fe-4S] cluster. Mo-bis(molybdopterin guanine dinucleotide) is required as a cofactor. Post-translationally, predicted to be exported by the Tat system. The position of the signal peptide cleavage has not been experimentally proven.

Its subcellular location is the periplasm. The catalysed reaction is 2 Fe(II)-[cytochrome] + nitrate + 2 H(+) = 2 Fe(III)-[cytochrome] + nitrite + H2O. Functionally, catalytic subunit of the periplasmic nitrate reductase complex NapAB. Receives electrons from NapB and catalyzes the reduction of nitrate to nitrite. This is Periplasmic nitrate reductase from Salmonella agona (strain SL483).